Here is a 388-residue protein sequence, read N- to C-terminus: Lipid-A-disaccharide synthase (388 aa).

The protein belongs to the LpxB family.

It carries out the reaction a lipid X + a UDP-2-N,3-O-bis[(3R)-3-hydroxyacyl]-alpha-D-glucosamine = a lipid A disaccharide + UDP + H(+). The protein operates within bacterial outer membrane biogenesis; LPS lipid A biosynthesis. Condensation of UDP-2,3-diacylglucosamine and 2,3-diacylglucosamine-1-phosphate to form lipid A disaccharide, a precursor of lipid A, a phosphorylated glycolipid that anchors the lipopolysaccharide to the outer membrane of the cell. The protein is Lipid-A-disaccharide synthase of Burkholderia pseudomallei (strain 1710b).